A 115-amino-acid chain; its full sequence is Ribonuclease P protein component (115 aa).

It belongs to the RnpA family. As to quaternary structure, consists of a catalytic RNA component (M1 or rnpB) and a protein subunit.

The catalysed reaction is Endonucleolytic cleavage of RNA, removing 5'-extranucleotides from tRNA precursor.. Functionally, RNaseP catalyzes the removal of the 5'-leader sequence from pre-tRNA to produce the mature 5'-terminus. It can also cleave other RNA substrates such as 4.5S RNA. The protein component plays an auxiliary but essential role in vivo by binding to the 5'-leader sequence and broadening the substrate specificity of the ribozyme. This chain is Ribonuclease P protein component, found in Bacillus cereus (strain G9842).